Reading from the N-terminus, the 312-residue chain is ECF RNA polymerase sigma factor SigJ (312 aa).

The interval 6–65 (FEALRQHLMSVAYRLTGTVADAEDIVQEAWLRWDSPDTVIADPRAWLTTVVSRLGLDKLR) is sigma-70 factor domain-2. Residues 29 to 32 (DIVQ) carry the Polymerase core binding motif. The interval 107 to 155 (MVVLERLRPDQRVAFVLHDGFAVPFAEVAEVLGTSEAAARQLASRARKA) is sigma-70 factor domain-4. The segment at residues 131-150 (FAEVAEVLGTSEAAARQLAS) is a DNA-binding region (H-T-H motif). Positions 293 to 312 (GSPLKERRAQPTGRGRHHRN) are disordered.

Belongs to the sigma-70 factor family. ECF subfamily. In terms of assembly, interacts transiently with the RNA polymerase catalytic core formed by RpoA, RpoB, RpoC and RpoZ (2 alpha, 1 beta, 1 beta' and 1 omega subunit) to form the RNA polymerase holoenzyme that can initiate transcription.

Its function is as follows. Sigma factors are initiation factors that promote the attachment of RNA polymerase to specific initiation sites and are then released. Extracytoplasmic function (ECF) sigma factors are held in an inactive form by an anti-sigma factor until released, although no anti-sigma factor is known for this protein. Regulates the promoter of SigI, may not be autoregulated. In Mycobacterium tuberculosis (strain ATCC 25618 / H37Rv), this protein is ECF RNA polymerase sigma factor SigJ (sigJ).